The following is a 110-amino-acid chain: Suppressor of silencing 2b (110 aa).

The interval 16–45 is disordered; that stretch reads ARMVEAKKQRRRSHKQNRRERGHKSPSERA. The short motif at 22–27 is the Nuclear localization signal element; sequence KKQRRR. The segment covering 23–37 has biased composition (basic residues); sequence KQRRRSHKQNRRERG.

It belongs to the cucumovirus/ilarvirus protein 2b family. As to quaternary structure, homotetramer. Interacts with host AGO1; this interaction blocks AGO1 cleavage activity to attenuate RNA silencing and thus counter host defense. Interacts with host JAZ.

The protein resides in the host nucleus. Functionally, multifunctional protein that plays two independent roles: viral suppressor of host RNAi (VSR) and viral inducer of host attractiveness to insect vectors (VIA). Acts as a suppressor of RNA-mediated gene silencing, also known as post-transcriptional gene silencing (PTGS), a mechanism of plant viral defense that limits the accumulation of viral RNAs. May directly interfere with mobile silencing signaling. Also inhibits signal transduction by the phytohormone jasmonate, making the infected plant more attractive to aphids, which are the second host to play a role as a dissemination vector. Acts by binding to and inhibiting JAZ degradation in the host. This is Suppressor of silencing 2b from Cucurbita pepo (Vegetable marrow).